We begin with the raw amino-acid sequence, 412 residues long: Glutamate dehydrogenase (412 aa).

Lysine 102 is an active-site residue.

The protein belongs to the Glu/Leu/Phe/Val dehydrogenases family. In roots, stems, leaves and flowers but not in fruits.

The protein localises to the mitochondrion matrix. The enzyme catalyses L-glutamate + NAD(+) + H2O = 2-oxoglutarate + NH4(+) + NADH + H(+). The catalysed reaction is L-glutamate + NADP(+) + H2O = 2-oxoglutarate + NH4(+) + NADPH + H(+). In Solanum lycopersicum (Tomato), this protein is Glutamate dehydrogenase (GDH1).